The chain runs to 428 residues: D-amino acid dehydrogenase (428 aa).

3–17 (VVILGSGVVGVASAY) is a binding site for FAD.

This sequence belongs to the DadA oxidoreductase family. The cofactor is FAD.

It catalyses the reaction a D-alpha-amino acid + A + H2O = a 2-oxocarboxylate + AH2 + NH4(+). It functions in the pathway amino-acid degradation; D-alanine degradation; NH(3) and pyruvate from D-alanine: step 1/1. Oxidative deamination of D-amino acids. The chain is D-amino acid dehydrogenase from Burkholderia cenocepacia (strain HI2424).